The following is a 415-amino-acid chain: Multifunctional CCA protein (415 aa).

ATP-binding residues include Gly8 and Arg11. Residues Gly8 and Arg11 each contribute to the CTP site. 2 residues coordinate Mg(2+): Asp21 and Asp23. The ATP site is built by Arg91, Arg143, and Arg146. CTP contacts are provided by Arg91, Arg143, and Arg146. One can recognise an HD domain in the interval Thr232–Leu333.

Belongs to the tRNA nucleotidyltransferase/poly(A) polymerase family. Bacterial CCA-adding enzyme type 1 subfamily. Monomer. Can also form homodimers and oligomers. It depends on Mg(2+) as a cofactor. Requires Ni(2+) as cofactor.

The enzyme catalyses a tRNA precursor + 2 CTP + ATP = a tRNA with a 3' CCA end + 3 diphosphate. It catalyses the reaction a tRNA with a 3' CCA end + 2 CTP + ATP = a tRNA with a 3' CCACCA end + 3 diphosphate. Its function is as follows. Catalyzes the addition and repair of the essential 3'-terminal CCA sequence in tRNAs without using a nucleic acid template. Adds these three nucleotides in the order of C, C, and A to the tRNA nucleotide-73, using CTP and ATP as substrates and producing inorganic pyrophosphate. tRNA 3'-terminal CCA addition is required both for tRNA processing and repair. Also involved in tRNA surveillance by mediating tandem CCA addition to generate a CCACCA at the 3' terminus of unstable tRNAs. While stable tRNAs receive only 3'-terminal CCA, unstable tRNAs are marked with CCACCA and rapidly degraded. This chain is Multifunctional CCA protein, found in Cupriavidus pinatubonensis (strain JMP 134 / LMG 1197) (Cupriavidus necator (strain JMP 134)).